The sequence spans 285 residues: Protease HtpX homolog (285 aa).

The next 2 helical transmembrane spans lie at 7-27 (TAML…MIGG) and 30-50 (GMTI…WFSD). A Zn(2+)-binding site is contributed by H131. The active site involves E132. H135 serves as a coordination point for Zn(2+). The next 2 membrane-spanning stretches (helical) occupy residues 146–166 (ISAT…FFGG) and 177–197 (IAGI…QMAI). Residue E202 participates in Zn(2+) binding.

Belongs to the peptidase M48B family. It depends on Zn(2+) as a cofactor.

The protein localises to the cell inner membrane. The polypeptide is Protease HtpX homolog (Burkholderia mallei (strain NCTC 10247)).